Reading from the N-terminus, the 218-residue chain is Protease PrsW (218 aa).

Residues 1 to 23 (MFAIISAGIAPGIALLSYFYLKD) form a helical membrane-spanning segment. Residues 24–30 (QYDNEPV) are Cytoplasmic-facing. Residues 31–53 (HMVLRSFFLGVVLVFPIMFIQYV) form a helical membrane-spanning segment. Over 54–98 (LEKENVGGGSFFVSFLSSGFLEESLKWFILMISVYPHAHFDEHYD) the chain is Extracellular. Residues 99-121 (GIVYGASVSLGFATLENILYLIG) traverse the membrane as a helical segment. At 122 to 129 (HGVEHAFV) the chain is on the cytoplasmic side. Residues 130–151 (RALLPVSCHALIGVIMGFYLGK) form a helical membrane-spanning segment. Residues 152–180 (ARFSADKARVKWLTLSLVVPSLLHGSYDF) lie on the Extracellular side of the membrane. A helical transmembrane segment spans residues 181–203 (ILTALSNWIYYMLPFMVFLWWFG). Residues 204 to 218 (LRKAKKARSVNMMQV) lie on the Cytoplasmic side of the membrane.

This sequence belongs to the protease PrsW family.

The protein resides in the cell membrane. In terms of biological role, involved in the degradation of anti-sigma-W factor RsiW. Responsible for Site-1 cleavage of the RsiW anti-sigma factor. This results, after two other proteolytic steps catalyzed by the RasP and ClpXP proteases, in the release of SigW and the transcription activation of the genes under the control of the sigma-W factor. Seems to be responsible for sensing antimicrobial peptides that damage the cell membrane and other agents that cause cell envelope stress. Therefore it is a protease governing regulated intramembrane proteolysis and resistance to antimicrobial peptides in B.subtilis. The chain is Protease PrsW from Bacillus subtilis (strain 168).